A 458-amino-acid chain; its full sequence is RuvB-like helicase 1 (458 aa).

An ATP-binding site is contributed by 71–78 (GGPGTGKT).

It belongs to the RuvB family. In terms of assembly, may form heterododecamers with RVB2. Component of the SWR1 chromatin remodeling complex, the INO80 chromatin remodeling complex, and of the R2TP complex.

It is found in the nucleus. The catalysed reaction is ATP + H2O = ADP + phosphate + H(+). Its function is as follows. DNA helicase which participates in several chromatin remodeling complexes, including the SWR1 and the INO80 complexes. The SWR1 complex mediates the ATP-dependent exchange of histone H2A for the H2A variant HZT1 leading to transcriptional regulation of selected genes by chromatin remodeling. The INO80 complex remodels chromatin by shifting nucleosomes and is involved in DNA repair. Also involved in pre-rRNA processing. The polypeptide is RuvB-like helicase 1 (RVB1) (Gibberella zeae (strain ATCC MYA-4620 / CBS 123657 / FGSC 9075 / NRRL 31084 / PH-1) (Wheat head blight fungus)).